A 424-amino-acid polypeptide reads, in one-letter code: Serine--tRNA ligase (424 aa).

L-serine is bound at residue 231–233 (TAE). 261–263 (RSE) serves as a coordination point for ATP. Glu-284 provides a ligand contact to L-serine. Position 348–351 (348–351 (ETSS)) interacts with ATP. Ser-383 contacts L-serine.

The protein belongs to the class-II aminoacyl-tRNA synthetase family. Type-1 seryl-tRNA synthetase subfamily. As to quaternary structure, homodimer. The tRNA molecule binds across the dimer.

It localises to the cytoplasm. It carries out the reaction tRNA(Ser) + L-serine + ATP = L-seryl-tRNA(Ser) + AMP + diphosphate + H(+). The catalysed reaction is tRNA(Sec) + L-serine + ATP = L-seryl-tRNA(Sec) + AMP + diphosphate + H(+). It functions in the pathway aminoacyl-tRNA biosynthesis; selenocysteinyl-tRNA(Sec) biosynthesis; L-seryl-tRNA(Sec) from L-serine and tRNA(Sec): step 1/1. Catalyzes the attachment of serine to tRNA(Ser). Is also able to aminoacylate tRNA(Sec) with serine, to form the misacylated tRNA L-seryl-tRNA(Sec), which will be further converted into selenocysteinyl-tRNA(Sec). The polypeptide is Serine--tRNA ligase (Metamycoplasma arthritidis (strain 158L3-1) (Mycoplasma arthritidis)).